A 322-amino-acid polypeptide reads, in one-letter code: uncharacterized protein (322 aa).

This sequence belongs to the glycosyltransferase 2 family.

This is an uncharacterized protein from Nostoc sp. (strain PCC 7120 / SAG 25.82 / UTEX 2576).